The following is a 501-amino-acid chain: UDP-N-acetylmuramate--L-alanine ligase (501 aa).

130–136 serves as a coordination point for ATP; it reads GTHGKTS.

Belongs to the MurCDEF family.

The protein localises to the cytoplasm. It carries out the reaction UDP-N-acetyl-alpha-D-muramate + L-alanine + ATP = UDP-N-acetyl-alpha-D-muramoyl-L-alanine + ADP + phosphate + H(+). The protein operates within cell wall biogenesis; peptidoglycan biosynthesis. Cell wall formation. The chain is UDP-N-acetylmuramate--L-alanine ligase from Nocardia farcinica (strain IFM 10152).